Consider the following 322-residue polypeptide: Thiamine thiazole synthase (322 aa).

Residues Cys-84, 105–106, Gly-113, and Val-178 contribute to the substrate site; that span reads EA. Cys-211 bears the 2,3-didehydroalanine (Cys) mark. Substrate contacts are provided by residues Asp-213, His-228, Met-280, and 290–292; that span reads RMG.

Belongs to the THI4 family. In terms of assembly, homooctamer. It depends on Fe cation as a cofactor. During the catalytic reaction, a sulfide is transferred from Cys-211 to a reaction intermediate, generating a dehydroalanine residue.

The protein localises to the cytoplasm. It is found in the nucleus. The catalysed reaction is [ADP-thiazole synthase]-L-cysteine + glycine + NAD(+) = [ADP-thiazole synthase]-dehydroalanine + ADP-5-ethyl-4-methylthiazole-2-carboxylate + nicotinamide + 3 H2O + 2 H(+). Involved in biosynthesis of the thiamine precursor thiazole. Catalyzes the conversion of NAD and glycine to adenosine diphosphate 5-(2-hydroxyethyl)-4-methylthiazole-2-carboxylic acid (ADT), an adenylated thiazole intermediate. The reaction includes an iron-dependent sulfide transfer from a conserved cysteine residue of the protein to a thiazole intermediate. The enzyme can only undergo a single turnover, which suggests it is a suicide enzyme. May have additional roles in adaptation to various stress conditions and in DNA damage tolerance. The polypeptide is Thiamine thiazole synthase (Fusarium vanettenii (strain ATCC MYA-4622 / CBS 123669 / FGSC 9596 / NRRL 45880 / 77-13-4) (Fusarium solani subsp. pisi)).